The following is a 370-amino-acid chain: MRLLVSGGGTGGHIYPALALIERLKQVEPDTEVLYVGTTRGLENKIVPDAGIELETMHMQGFKRSLSLENFKTIYLFLNSVHHAKKIISEFKPDVVLGTGGYVSGAVLYAAAKKHIPTVIHEQNSVVGVTNKFLSRYVDQIAIAFEAARSQFPADKVTMAGNPRAQQVAAKKDSDFSWTRYDLKDDVPTLMIFGGSQGAPKINKTVVDAIPEFNKRPYQVIFATGQKRYDDVKKQLAEGNIKPADNVKVVPYIKDMPAKMPRVAALVSRAGATTIAEVTALGVPTILIPSPYVTANHQVKNAQALVKNNAGLMITEDKLDARALLTQADKIMEDEEVRKEMAHAAEKMGRPDAADRLIKILHKAIDEHEK.

UDP-N-acetyl-alpha-D-glucosamine contacts are provided by residues 10-12, Asn-124, Ser-196, Ile-253, and Gln-298; that span reads TGG.

This sequence belongs to the glycosyltransferase 28 family. MurG subfamily.

The protein localises to the cell membrane. The catalysed reaction is Mur2Ac(oyl-L-Ala-gamma-D-Glu-L-Lys-D-Ala-D-Ala)-di-trans,octa-cis-undecaprenyl diphosphate + UDP-N-acetyl-alpha-D-glucosamine = beta-D-GlcNAc-(1-&gt;4)-Mur2Ac(oyl-L-Ala-gamma-D-Glu-L-Lys-D-Ala-D-Ala)-di-trans,octa-cis-undecaprenyl diphosphate + UDP + H(+). Its pathway is cell wall biogenesis; peptidoglycan biosynthesis. Its function is as follows. Cell wall formation. Catalyzes the transfer of a GlcNAc subunit on undecaprenyl-pyrophosphoryl-MurNAc-pentapeptide (lipid intermediate I) to form undecaprenyl-pyrophosphoryl-MurNAc-(pentapeptide)GlcNAc (lipid intermediate II). The protein is UDP-N-acetylglucosamine--N-acetylmuramyl-(pentapeptide) pyrophosphoryl-undecaprenol N-acetylglucosamine transferase of Limosilactobacillus reuteri subsp. reuteri (strain JCM 1112) (Lactobacillus reuteri).